We begin with the raw amino-acid sequence, 362 residues long: MADQRKAALDVAIRKIEKNFGKGSIMRMGDATDMKVASVSSGSLAIDKALGIGGYPRGRIVEIYGPESSGKTTVALHAVAEVQRQGGTAAYIDAENALDPQYAEALGVNIDDLLLSQPDSGEEGLEIADALISSGAVDLVIVDSVAALVPRAEIDGDMGDTHVGLQARLMSQALRKLSGEINKTKTIAIFINQIREKVGVMFGNPETTTGGRALKFYSTIRMEIRRAEQIKNGTDVIGNKAKVKIVKNKVAPPFKRCEVDIMYGEGISKTGELLDMAVENDLVDKSGAWYSYGSERIGQGRENAKKWLKEHPDSMNELMDKVRVANGMEPLNEKSTKETADDKASGKTGENKQETIEEASKE.

65 to 72 provides a ligand contact to ATP; that stretch reads GPESSGKT. The disordered stretch occupies residues 323-362; that stretch reads RVANGMEPLNEKSTKETADDKASGKTGENKQETIEEASKE. The segment covering 331–362 has biased composition (basic and acidic residues); sequence LNEKSTKETADDKASGKTGENKQETIEEASKE.

It belongs to the RecA family.

The protein resides in the cytoplasm. Functionally, can catalyze the hydrolysis of ATP in the presence of single-stranded DNA, the ATP-dependent uptake of single-stranded DNA by duplex DNA, and the ATP-dependent hybridization of homologous single-stranded DNAs. It interacts with LexA causing its activation and leading to its autocatalytic cleavage. The polypeptide is Protein RecA (Limosilactobacillus reuteri (strain DSM 20016) (Lactobacillus reuteri)).